A 486-amino-acid chain; its full sequence is ATP-dependent rRNA helicase rrp3 (486 aa).

A disordered region spans residues 1 to 60 (MSSVKRRKTDKNPSLEGLKSKKTKESKKESHTPSPEPIEDTEDNRVIEETEEAEEDDAPK). The Q motif signature appears at 60–88 (KSFKDLGIVDSLCEACDTLGYKAPTPIQR). The 172-residue stretch at 91–262 (IPLALQGRDL…RASLKDPLRV (172 aa)) folds into the Helicase ATP-binding domain. 104-111 (AETGSGKT) contacts ATP. The DEAD box motif lies at 210–213 (DEAD). Positions 286–434 (HKDTYLIYLL…EYPTVKDEVM (149 aa)) constitute a Helicase C-terminal domain. 2 stretches are compositionally biased toward basic and acidic residues: residues 447–460 (ARNEMKNLHEDRGK) and 476–486 (RGRDEMDREEG). The tract at residues 447–486 (ARNEMKNLHEDRGKKGAVLKGRRPANGAKRGRDEMDREEG) is disordered.

Belongs to the DEAD box helicase family. DDX47/RRP3 subfamily. Interacts with the SSU processome.

It is found in the nucleus. It catalyses the reaction ATP + H2O = ADP + phosphate + H(+). In terms of biological role, ATP-dependent rRNA helicase required for pre-ribosomal RNA processing. Involved in the maturation of the 35S-pre-rRNA and to its cleavage to mature 18S rRNA. The polypeptide is ATP-dependent rRNA helicase rrp3 (Botryotinia fuckeliana (strain B05.10) (Noble rot fungus)).